We begin with the raw amino-acid sequence, 346 residues long: Biotin synthase (346 aa).

The Radical SAM core domain maps to 38–256; it reads RQVQVSTLLS…IAVARIMMPT (219 aa). [4Fe-4S] cluster-binding residues include C53, C57, and C60. [2Fe-2S] cluster contacts are provided by C97, C128, C188, and R260.

Belongs to the radical SAM superfamily. Biotin synthase family. In terms of assembly, homodimer. The cofactor is [4Fe-4S] cluster. It depends on [2Fe-2S] cluster as a cofactor.

The enzyme catalyses (4R,5S)-dethiobiotin + (sulfur carrier)-SH + 2 reduced [2Fe-2S]-[ferredoxin] + 2 S-adenosyl-L-methionine = (sulfur carrier)-H + biotin + 2 5'-deoxyadenosine + 2 L-methionine + 2 oxidized [2Fe-2S]-[ferredoxin]. The protein operates within cofactor biosynthesis; biotin biosynthesis; biotin from 7,8-diaminononanoate: step 2/2. Catalyzes the conversion of dethiobiotin (DTB) to biotin by the insertion of a sulfur atom into dethiobiotin via a radical-based mechanism. In Escherichia coli (strain K12 / DH10B), this protein is Biotin synthase.